We begin with the raw amino-acid sequence, 300 residues long: Ribosomal RNA small subunit methyltransferase H (300 aa).

S-adenosyl-L-methionine-binding positions include 46-48, aspartate 65, phenylalanine 92, aspartate 107, and glutamine 114; that span reads GGH.

The protein belongs to the methyltransferase superfamily. RsmH family.

The protein resides in the cytoplasm. It carries out the reaction cytidine(1402) in 16S rRNA + S-adenosyl-L-methionine = N(4)-methylcytidine(1402) in 16S rRNA + S-adenosyl-L-homocysteine + H(+). Its function is as follows. Specifically methylates the N4 position of cytidine in position 1402 (C1402) of 16S rRNA. The chain is Ribosomal RNA small subunit methyltransferase H from Prochlorococcus marinus (strain MIT 9215).